Reading from the N-terminus, the 906-residue chain is NACHT, LRR and PYD domains-containing protein 1b allele 4 (906 aa).

The segment at 1 to 22 is disordered; it reads MEESPPKQKSNTKVAQHEGQQD. The 310-residue stretch at 126-435 folds into the NACHT domain; the sequence is QLVIIEGAAG…EFFAAISCIL (310 aa). ATP is bound at residue 132–139; it reads GAAGIGKS. LRR repeat units follow at residues 627–647 and 684–704; these read NLEGLDLSGNSLRYSVVQSLC and SLTELYLQLNDLGDDGVRMLC. In terms of domain architecture, FIIND (incomplete) spans 789 to 906; the sequence is FWGPTGPVAT…FQEHGSRNAR (118 aa).

The protein belongs to the NLRP family. As to expression, expressed in macrophages.

The protein localises to the cytoplasm. It is found in the cytosol. In terms of biological role, probable inactive allele of Nlrp1b, which lacks a CARD domain, suggesting that it is not able to form an inflammasome. Contrary to Nlrp1b allele 1, allele 4 is not activated by B.anthracis lethal toxin and no other activation signal is reported. In Mus musculus (Mouse), this protein is NACHT, LRR and PYD domains-containing protein 1b allele 4.